The following is a 610-amino-acid chain: E3 ubiquitin-protein ligase hrd-1 (610 aa).

The signal sequence occupies residues 1–23 (MRVSAGLMIGGSCVATAATILNA). The Lumenal portion of the chain corresponds to 24–41 (FLINKQFYPSIVYLSKSN). The chain crosses the membrane as a helical span at residues 42–62 (ASMAVIYVQGIVLVYLMFQLL). At 63–99 (KSILFGDLRAAEAEHLSERTWHAVLETCLAFTVFRDD) the chain is on the cytoplasmic side. Residues 100 to 120 (FSAIFVMQFIGLLFIKCFHWL) traverse the membrane as a helical segment. The Lumenal portion of the chain corresponds to 121–144 (ADDRVDMMERSPVITLRFHLRMMT). A helical transmembrane segment spans residues 145-165 (VLAALGFADSYFVSSAYFTTI). Topologically, residues 166-170 (TRGAS) are cytoplasmic. A helical transmembrane segment spans residues 171-191 (AQIVFGFEYAILLALVLHVTI). At 192–215 (KYLLHMHDLRNPQSWDNKAVYLLY) the chain is on the lumenal side. Residues 216 to 236 (AELFINLIRCLLYGFFAVVML) traverse the membrane as a helical segment. Topologically, residues 237–610 (RVHTFPLFSV…ARLLGENANQ (374 aa)) are cytoplasmic. The RING-type; atypical zinc finger occupies 292–333 (CIICREEMTVDASPKRLPCSHVFHAHCLRSWFQRQQTCPTCR). Disordered stretches follow at residues 386-408 (QPAGAGGAQPGAAQAGGQPGPFP), 452-480 (VNTTQGTSSETPPVNPSYSQLSTEELRRM), and 521-610 (RPVV…NANQ). Over residues 452–474 (VNTTQGTSSETPPVNPSYSQLST) the composition is skewed to polar residues. Low complexity predominate over residues 560-589 (TESPSTSSTAPSTSSPVTASSTPTTSSTRT).

Belongs to the HRD1 family. Homodimer.

The protein localises to the endoplasmic reticulum membrane. The catalysed reaction is S-ubiquitinyl-[E2 ubiquitin-conjugating enzyme]-L-cysteine + [acceptor protein]-L-lysine = [E2 ubiquitin-conjugating enzyme]-L-cysteine + N(6)-ubiquitinyl-[acceptor protein]-L-lysine.. It participates in protein modification; protein ubiquitination. Acts as an E3 ubiquitin-protein ligase which accepts ubiquitin specifically from endoplasmic reticulum-associated ubc-7 E2 ligase and transfers it to substrates, promoting their degradation. Component of the endoplasmic reticulum quality control (ERQC) system, which is also called the ER-associated degradation (ERAD) system, involved in ubiquitin-dependent degradation of misfolded endoplasmic reticulum proteins. Also promotes the degradation of normal but naturally short-lived proteins. Protects cells from ER stress-induced apoptosis. Thought to play a role together with hsp-3 in developmental growth and function of intestinal cells and to play a role together with hsp-4 in gonad formation. Plays a key role in the degradation of the potassium channel slo-1, perhaps acting directly, in targeting slo-1 to the ER-associated degradation pathway (ERAD), and also indirectly, via activation of the transcription factor skn-1, which mediates proteasomal homeostasis. The protein is E3 ubiquitin-protein ligase hrd-1 (sel-11) of Caenorhabditis elegans.